We begin with the raw amino-acid sequence, 366 residues long: UDP-N-acetylglucosamine--N-acetylmuramyl-(pentapeptide) pyrophosphoryl-undecaprenol N-acetylglucosamine transferase (366 aa).

Residues 10-12 (TGG), Asn-124, Arg-165, Ser-192, Ile-247, and Gln-292 contribute to the UDP-N-acetyl-alpha-D-glucosamine site.

It belongs to the glycosyltransferase 28 family. MurG subfamily.

The protein resides in the cell inner membrane. It carries out the reaction di-trans,octa-cis-undecaprenyl diphospho-N-acetyl-alpha-D-muramoyl-L-alanyl-D-glutamyl-meso-2,6-diaminopimeloyl-D-alanyl-D-alanine + UDP-N-acetyl-alpha-D-glucosamine = di-trans,octa-cis-undecaprenyl diphospho-[N-acetyl-alpha-D-glucosaminyl-(1-&gt;4)]-N-acetyl-alpha-D-muramoyl-L-alanyl-D-glutamyl-meso-2,6-diaminopimeloyl-D-alanyl-D-alanine + UDP + H(+). The protein operates within cell wall biogenesis; peptidoglycan biosynthesis. In terms of biological role, cell wall formation. Catalyzes the transfer of a GlcNAc subunit on undecaprenyl-pyrophosphoryl-MurNAc-pentapeptide (lipid intermediate I) to form undecaprenyl-pyrophosphoryl-MurNAc-(pentapeptide)GlcNAc (lipid intermediate II). The sequence is that of UDP-N-acetylglucosamine--N-acetylmuramyl-(pentapeptide) pyrophosphoryl-undecaprenol N-acetylglucosamine transferase from Geotalea daltonii (strain DSM 22248 / JCM 15807 / FRC-32) (Geobacter daltonii).